Consider the following 612-residue polypeptide: Citryl-spermidine/3,4-dihydroxybenzoyl-citryl-spermidine:spermidine ligase (612 aa).

ATP is bound by residues 282-284 (SMR), Lys-298, Arg-310, Tyr-390, and Glu-461.

Belongs to the IucA/IucC family. As to quaternary structure, homodimer.

It carries out the reaction N(8)-citryl-spermidine + spermidine + ATP = N(8),N'(8)-citryl-bis(spermidine) + AMP + diphosphate + H(+). The catalysed reaction is N(1)-(3,4-dihydroxybenzoyl)-N(8)-citryl-spermidine + spermidine + ATP = N(1)-(3,4-dihydroxybenzoyl)-N(8),N'(8)-citryl-bis(spermidine) + AMP + diphosphate + H(+). It functions in the pathway siderophore biosynthesis; petrobactin biosynthesis. Functionally, involved in the biosynthesis of petrobactin, a catecholate siderophore that functions in both iron acquisition and virulence. Catalyzes the ATP-dependent condensation of spermidine with N(8)-citryl-spermidine or N(1)-(3,4-dihydroxbenzoyl)-N(8)-citryl-spermidine, two intermediates in petrobactin biosynthesis pathway. This is Citryl-spermidine/3,4-dihydroxybenzoyl-citryl-spermidine:spermidine ligase from Bacillus anthracis.